A 391-amino-acid polypeptide reads, in one-letter code: 3-ketoacyl-CoA thiolase (391 aa).

Cys-95 serves as the catalytic Acyl-thioester intermediate. Active-site proton acceptor residues include His-347 and Cys-377.

This sequence belongs to the thiolase-like superfamily. Thiolase family. As to quaternary structure, heterotetramer of two alpha chains (FadB) and two beta chains (FadA).

The protein localises to the cytoplasm. The catalysed reaction is an acyl-CoA + acetyl-CoA = a 3-oxoacyl-CoA + CoA. It participates in lipid metabolism; fatty acid beta-oxidation. In terms of biological role, catalyzes the final step of fatty acid oxidation in which acetyl-CoA is released and the CoA ester of a fatty acid two carbons shorter is formed. In Pseudomonas putida (strain ATCC 700007 / DSM 6899 / JCM 31910 / BCRC 17059 / LMG 24140 / F1), this protein is 3-ketoacyl-CoA thiolase.